The following is a 481-amino-acid chain: U6 small nuclear RNA (adenine-(43)-N(6))-methyltransferase (481 aa).

Lysine 82, glycine 108, aspartate 131, threonine 164, and asparagine 184 together coordinate S-adenosyl-L-methionine.

It belongs to the methyltransferase superfamily. METTL16/RlmF family. As to quaternary structure, self-associates. Interacts with dlc-1; the interaction is direct, and is required for nuclear localization of mett-10.

It localises to the nucleus. It catalyses the reaction an adenosine in mRNA + S-adenosyl-L-methionine = an N(6)-methyladenosine in mRNA + S-adenosyl-L-homocysteine + H(+). The enzyme catalyses adenosine in U6 snRNA + S-adenosyl-L-methionine = N(6)-methyladenosine in U6 snRNA + S-adenosyl-L-homocysteine + H(+). Functionally, RNA N6-methyltransferase that methylates adenosine residues at the N(6) position of a subset of RNAs and is involved in S-adenosyl-L-methionine homeostasis by regulating splicing of S-adenosylmethionine synthase transcripts (sams-3, sams-4 and sams-5). Able to N6-methylate a subset of mRNAs containing the 5'UACAGAAAC-3' nonamer sequence. Plays a key role in S-adenosyl-L-methionine homeostasis: under rich-diet conditions, catalyzes N6-methylation of S-adenosylmethionine synthase mRNAs (sams-3, sams-4 and sams-5), directly inhibiting splicing and protein production of S-adenosylmethionine synthase. In addition to mRNAs, also able to mediate N6-methylation of U6 small nuclear RNA (U6 snRNA). Required for gamete production, inhibiting germ cell proliferative fate and ensuring germ cell meiotic development. Also promotes progression of the mitotic cell cycle in those germ cells that continue to proliferate. Plays a role in the development of the vulva, somatic gonad and embryo. The protein is U6 small nuclear RNA (adenine-(43)-N(6))-methyltransferase of Caenorhabditis briggsae.